A 213-amino-acid polypeptide reads, in one-letter code: Ribosomal RNA large subunit methyltransferase E (213 aa).

S-adenosyl-L-methionine contacts are provided by Gly-60, Trp-62, Asp-80, Asp-96, and Asp-121. Catalysis depends on Lys-161, which acts as the Proton acceptor.

The protein belongs to the class I-like SAM-binding methyltransferase superfamily. RNA methyltransferase RlmE family.

The protein resides in the cytoplasm. It carries out the reaction uridine(2552) in 23S rRNA + S-adenosyl-L-methionine = 2'-O-methyluridine(2552) in 23S rRNA + S-adenosyl-L-homocysteine + H(+). Functionally, specifically methylates the uridine in position 2552 of 23S rRNA at the 2'-O position of the ribose in the fully assembled 50S ribosomal subunit. The polypeptide is Ribosomal RNA large subunit methyltransferase E (Xylella fastidiosa (strain M23)).